Consider the following 194-residue polypeptide: Ribosomal RNA large subunit methyltransferase E (194 aa).

G48, W50, D66, N82, and D110 together coordinate S-adenosyl-L-methionine. Catalysis depends on K150, which acts as the Proton acceptor.

It belongs to the class I-like SAM-binding methyltransferase superfamily. RNA methyltransferase RlmE family.

The protein resides in the cytoplasm. The catalysed reaction is uridine(2552) in 23S rRNA + S-adenosyl-L-methionine = 2'-O-methyluridine(2552) in 23S rRNA + S-adenosyl-L-homocysteine + H(+). Specifically methylates the uridine in position 2552 of 23S rRNA at the 2'-O position of the ribose in the fully assembled 50S ribosomal subunit. This is Ribosomal RNA large subunit methyltransferase E from Picrophilus torridus (strain ATCC 700027 / DSM 9790 / JCM 10055 / NBRC 100828 / KAW 2/3).